The chain runs to 277 residues: UPF0276 protein PP_2398 (277 aa).

It belongs to the UPF0276 family.

This is UPF0276 protein PP_2398 from Pseudomonas putida (strain ATCC 47054 / DSM 6125 / CFBP 8728 / NCIMB 11950 / KT2440).